A 255-amino-acid chain; its full sequence is Myogenic factor 5 (255 aa).

Residues 83 to 134 (DRRKAATMRERRRLKKVNQAFETLKRCTTTNPNQRLPKVEILRNAIQYIESL) form the bHLH domain. Low complexity predominate over residues 221-242 (SLPIPDSITPSPTSSTDSLPRS). The segment at 221-246 (SLPIPDSITPSPTSSTDSLPRSPDAH) is disordered.

In terms of assembly, efficient DNA binding requires dimerization with another bHLH protein.

The protein localises to the nucleus. Functionally, acts as a transcriptional activator that promotes transcription of muscle-specific target genes and plays a role in muscle differentiation. Induces fibroblasts to differentiate into myoblasts. Probable sequence specific DNA-binding protein. The chain is Myogenic factor 5 (myf5) from Xenopus laevis (African clawed frog).